Here is a 628-residue protein sequence, read N- to C-terminus: tRNA uridine 5-carboxymethylaminomethyl modification enzyme MnmG 1 (628 aa).

11-16 (GAGHAG) contacts FAD. 280 to 294 (GPRHCPSIDRKVLNF) serves as a coordination point for NAD(+).

It belongs to the MnmG family. Homodimer. Heterotetramer of two MnmE and two MnmG subunits. FAD serves as cofactor.

The protein localises to the cytoplasm. Functionally, NAD-binding protein involved in the addition of a carboxymethylaminomethyl (cmnm) group at the wobble position (U34) of certain tRNAs, forming tRNA-cmnm(5)s(2)U34. The chain is tRNA uridine 5-carboxymethylaminomethyl modification enzyme MnmG 1 from Fusobacterium nucleatum subsp. nucleatum (strain ATCC 25586 / DSM 15643 / BCRC 10681 / CIP 101130 / JCM 8532 / KCTC 2640 / LMG 13131 / VPI 4355).